The following is a 287-amino-acid chain: Diphthine methyl ester synthase (287 aa).

S-adenosyl-L-methionine contacts are provided by residues L9, D84, G87, 112–113 (SI), L163, V221, and H248.

Belongs to the diphthine synthase family.

The protein localises to the cytoplasm. The enzyme catalyses 2-[(3S)-amino-3-carboxypropyl]-L-histidyl-[translation elongation factor 2] + 4 S-adenosyl-L-methionine = diphthine methyl ester-[translation elongation factor 2] + 4 S-adenosyl-L-homocysteine + 3 H(+). The protein operates within protein modification; peptidyl-diphthamide biosynthesis. Its function is as follows. S-adenosyl-L-methionine-dependent methyltransferase that catalyzes four methylations of the modified target histidine residue in translation elongation factor 2 (EF-2), to form an intermediate called diphthine methyl ester. The four successive methylation reactions represent the second step of diphthamide biosynthesis. This Neurospora crassa (strain ATCC 24698 / 74-OR23-1A / CBS 708.71 / DSM 1257 / FGSC 987) protein is Diphthine methyl ester synthase (dph-5).